The following is an 87-amino-acid chain: Bombyxin B-10 (87 aa).

Positions 1–19 are cleaved as a signal peptide; sequence MKTILIFLVVISLMYSGEA. 3 cysteine pairs are disulfide-bonded: Cys-27/Cys-73, Cys-39/Cys-86, and Cys-72/Cys-77. A propeptide spans 46–64 (bombyxin B-10 C peptide); the sequence is SGAQYAPYFWTRQYLGSRG.

It belongs to the insulin family. As to quaternary structure, heterodimer of a B chain and an A chain linked by two disulfide bonds.

It is found in the secreted. Its function is as follows. Brain peptide responsible for activation of prothoracic glands to produce ecdysone in insects. The polypeptide is Bombyxin B-10 (BBXB10) (Bombyx mori (Silk moth)).